The primary structure comprises 1291 residues: 1-phosphatidylinositol 4,5-bisphosphate phosphodiesterase gamma-1 (1291 aa).

Ala-2 carries the post-translational modification N-acetylalanine. The 116-residue stretch at Arg-27–Glu-142 folds into the PH 1 domain. The EF-hand domain maps to Gln-152–Arg-187. Asp-165, Asn-167, Glu-169, Arg-171, and Asp-176 together coordinate Ca(2+). The region spanning Asp-320 to Lys-464 is the PI-PLC X-box domain. Active-site residues include His-335 and His-380. In terms of domain architecture, PH 2; first part spans Ser-489–Thr-523. Tyr-506 carries the post-translational modification Phosphotyrosine. The interval Glu-522 to Leu-544 is disordered. SH2 domains lie at Trp-550 to Val-657 and Trp-668 to Ile-756. The residue at position 771 (Tyr-771) is a Phosphotyrosine; by SYK. A phosphotyrosine mark is found at Tyr-775 and Tyr-783. Residue Tyr-783 is modified to Phosphotyrosine; by ITK, SYK and TXK. One can recognise an SH3 domain in the interval Thr-791–Ser-851. The PH 2; second part domain occupies Phe-895 to Gln-931. The 118-residue stretch at Leu-953–Arg-1070 folds into the PI-PLC Y-box domain. Tyr-977 carries the post-translational modification Phosphotyrosine. The C2 domain maps to Asp-1071–Asn-1194. Residues Ser-1222, Ser-1228, and Ser-1249 each carry the phosphoserine modification. Position 1254 is a phosphotyrosine (Tyr-1254). A Phosphoserine modification is found at Ser-1264. The tract at residues His-1271 to Leu-1291 is disordered.

Interacts with AGAP2 via its SH3 domain. Interacts (via SH2 domain) with RET. Interacts with FLT1 (tyrosine-phosphorylated). Interacts (via SH2 domain) with FGFR1, FGFR2, FGFR3 and FGFR4 (phosphorylated). Interacts with LAT (phosphorylated) upon TCR activation. Interacts (via SH3 domain) with the Pro-rich domain of TNK1. Associates with BLNK, VAV1, GRB2 and NCK1 in a B-cell antigen receptor-dependent fashion. Interacts with CBLB in activated T-cells; which inhibits phosphorylation. Interacts with SHB. Interacts (via SH3 domain) with the Arg/Gly-rich-flanked Pro-rich domains of KHDRBS1/SAM68. This interaction is selectively regulated by arginine methylation of KHDRBS1/SAM68. Interacts with INPP5D/SHIP1, THEMIS and CLNK. Interacts with AXL, FLT4 and KIT. Interacts with RALGPS1. Interacts (via the SH2 domains) with VIL1 (phosphorylated at C-terminus tyrosine phosphorylation sites). Interacts (via SH2 domain) with PDGFRA and PDGFRB (tyrosine phosphorylated). Interacts with PIP5K1C. Interacts with NTRK1 and NTRK2 (phosphorylated upon ligand-binding). Interacts with SYK; activates PLCG1. Interacts with GRB2, LAT and THEMIS upon TCR activation in thymocytes. Interacts with TESPA1; the association is increased with prolonged stimulation of the TCR and may facilitate the assembly of the LAT signalosome. Interacts (via C-terminal proline-rich domain (PRD)) with PLCG1 (via SH3 domain); this interaction leads to guanine nucleotide exchange from PlCG1 to DNM1 and enhances DNM1-dependent endocytosis. The cofactor is Ca(2+). Post-translationally, ubiquitinated by CBLB in activated T-cells. In terms of processing, tyrosine phosphorylated in response to signaling via activated FLT3, KIT and PDGFRA. Tyrosine phosphorylated by activated FGFR1, FGFR2, FGFR3 and FGFR4. Tyrosine phosphorylated by activated FLT1 and KDR. Tyrosine phosphorylated by activated PDGFRB. The receptor-mediated activation of PLCG1 involves its phosphorylation by tyrosine kinases, in response to ligation of a variety of growth factor receptors and immune system receptors. For instance, SYK phosphorylates and activates PLCG1 in response to ligation of the B-cell receptor. May be dephosphorylated by PTPRJ. Phosphorylated by ITK and TXK on Tyr-783 upon TCR activation in T-cells.

Its subcellular location is the cell projection. It is found in the lamellipodium. It localises to the ruffle. The enzyme catalyses a 1,2-diacyl-sn-glycero-3-phospho-(1D-myo-inositol-4,5-bisphosphate) + H2O = 1D-myo-inositol 1,4,5-trisphosphate + a 1,2-diacyl-sn-glycerol + H(+). It carries out the reaction a 1,2-diacyl-sn-glycero-3-phospho-(1D-myo-inositol) + H2O = 1D-myo-inositol 1-phosphate + a 1,2-diacyl-sn-glycerol + H(+). With respect to regulation, activated by phosphorylation on tyrosine residues. Its function is as follows. Mediates the production of the second messenger molecules diacylglycerol (DAG) and inositol 1,4,5-trisphosphate (IP3). Plays an important role in the regulation of intracellular signaling cascades. Becomes activated in response to ligand-mediated activation of receptor-type tyrosine kinases, such as PDGFRA, PDGFRB, EGFR, FGFR1, FGFR2, FGFR3 and FGFR4. Plays a role in actin reorganization and cell migration. Guanine nucleotide exchange factor that binds the GTPase DNM1 and catalyzes the dissociation of GDP, allowing a GTP molecule to bind in its place, therefore enhancing DNM1-dependent endocytosis. This Bos taurus (Bovine) protein is 1-phosphatidylinositol 4,5-bisphosphate phosphodiesterase gamma-1.